The chain runs to 144 residues: (R)-specific enoyl-CoA hydratase (144 aa).

A MaoC-like domain is found at 13–128; sequence DIKEGQSASL…TFRTTCTVAG (116 aa).

In terms of assembly, homotetramer.

The catalysed reaction is a (3R)-3-hydroxyacyl-CoA = a (2E)-enoyl-CoA + H2O. In terms of biological role, catalyzes the hydration of trans-2-enoyl-CoAs with a chain-length of 4-6 carbon atoms, forming the corresponding (3R)-3-hydroxyacyl-CoAs, which can then be utilized for the production of polyhydroxyalkanoates (PHA) polymers. Cannot use trans-2,3-octenoyl-CoA as substrate. In Rhodospirillum rubrum (strain ATCC 11170 / ATH 1.1.1 / DSM 467 / LMG 4362 / NCIMB 8255 / S1), this protein is (R)-specific enoyl-CoA hydratase.